Consider the following 370-residue polypeptide: Histidinol-phosphate aminotransferase 2 (370 aa).

N6-(pyridoxal phosphate)lysine is present on lysine 230.

It belongs to the class-II pyridoxal-phosphate-dependent aminotransferase family. Histidinol-phosphate aminotransferase subfamily. As to quaternary structure, homodimer. Pyridoxal 5'-phosphate serves as cofactor.

It carries out the reaction L-histidinol phosphate + 2-oxoglutarate = 3-(imidazol-4-yl)-2-oxopropyl phosphate + L-glutamate. Its pathway is amino-acid biosynthesis; L-histidine biosynthesis; L-histidine from 5-phospho-alpha-D-ribose 1-diphosphate: step 7/9. The polypeptide is Histidinol-phosphate aminotransferase 2 (Pseudomonas fluorescens (strain Pf0-1)).